We begin with the raw amino-acid sequence, 338 residues long: Eukaryotic translation initiation factor 3 subunit H (338 aa).

The region spanning 22 to 154 (VQCDGLAVMK…LKAYRLTPQA (133 aa)) is the MPN domain.

It belongs to the eIF-3 subunit H family. Component of the eukaryotic translation initiation factor 3 (eIF-3) complex. The eIF-3 complex interacts with pix. Interacts with mxt.

The protein resides in the cytoplasm. Functionally, component of the eukaryotic translation initiation factor 3 (eIF-3) complex, which is involved in protein synthesis of a specialized repertoire of mRNAs and, together with other initiation factors, stimulates binding of mRNA and methionyl-tRNAi to the 40S ribosome. The eIF-3 complex specifically targets and initiates translation of a subset of mRNAs involved in cell proliferation. This is Eukaryotic translation initiation factor 3 subunit H from Drosophila yakuba (Fruit fly).